A 204-amino-acid chain; its full sequence is Guanylate kinase (204 aa).

Residues 4–182 (GMLVVVSGPS…AVNDLEAVLT (179 aa)) enclose the Guanylate kinase-like domain. ATP is bound at residue 11–18 (GPSGAGKG).

Belongs to the guanylate kinase family.

The protein resides in the cytoplasm. It carries out the reaction GMP + ATP = GDP + ADP. Its function is as follows. Essential for recycling GMP and indirectly, cGMP. The sequence is that of Guanylate kinase from Carboxydothermus hydrogenoformans (strain ATCC BAA-161 / DSM 6008 / Z-2901).